A 129-amino-acid chain; its full sequence is Fluoride-specific ion channel FluC 1 (129 aa).

4 consecutive transmembrane segments (helical) span residues 9–29, 33–53, 62–82, and 98–118; these read LSVGIFAFFGGGLRAYLNLIW, GTLTANIIGCFLLAFFTYFFV, LVTGLSTGFVGSFTTFSSFNL, and IYFFSSIFIGFLFAYLGMLVG. Positions 72 and 75 each coordinate Na(+).

Belongs to the fluoride channel Fluc/FEX (TC 1.A.43) family.

Its subcellular location is the cell membrane. The catalysed reaction is fluoride(in) = fluoride(out). Its activity is regulated as follows. Na(+) is not transported, but it plays an essential structural role and its presence is essential for fluoride channel function. Fluoride-specific ion channel. Important for reducing fluoride concentration in the cell, thus reducing its toxicity. The polypeptide is Fluoride-specific ion channel FluC 1 (Lactobacillus johnsonii (strain CNCM I-12250 / La1 / NCC 533)).